Consider the following 342-residue polypeptide: Muscleblind-like protein 3 (342 aa).

C3H1-type zinc fingers lie at residues 14-42 (WLTL…HPPR), 48-74 (NGRV…HPPP), 174-202 (TDRL…HPTD), and 210-236 (DNSV…HPPP). Low complexity predominate over residues 316–326 (PSTVSTATPPA). A disordered region spans residues 316 to 342 (PSTVSTATPPASNVPYVPTTTGNQLKY). Residues 333–342 (PTTTGNQLKY) show a composition bias toward polar residues.

It belongs to the muscleblind family.

Its subcellular location is the nucleus. It localises to the cytoplasm. Mediates pre-mRNA alternative splicing regulation. Acts either as activator or repressor of splicing on specific pre-mRNA targets. Inhibits cardiac troponin-T (TNNT2) pre-mRNA exon inclusion but induces insulin receptor (IR) pre-mRNA exon inclusion in muscle. Antagonizes the alternative splicing activity pattern of CELF proteins. Could inhibit terminal muscle differentiation, acting at approximately the time of myogenin induction. The polypeptide is Muscleblind-like protein 3 (Mbnl3) (Mus musculus (Mouse)).